The primary structure comprises 158 residues: ATP synthase subunit beta, mitochondrial (158 aa).

The protein belongs to the ATPase alpha/beta chains family. In terms of assembly, F-type ATPases have 2 components, CF(1) - the catalytic core - and CF(0) - the membrane proton channel. CF(1) has five subunits: alpha(3), beta(3), gamma(1), delta(1), epsilon(1). CF(0) has three main subunits: a, b and c.

It is found in the mitochondrion. Its subcellular location is the mitochondrion inner membrane. It carries out the reaction ATP + H2O + 4 H(+)(in) = ADP + phosphate + 5 H(+)(out). In terms of biological role, mitochondrial membrane ATP synthase (F(1)F(0) ATP synthase or Complex V) produces ATP from ADP in the presence of a proton gradient across the membrane which is generated by electron transport complexes of the respiratory chain. F-type ATPases consist of two structural domains, F(1) - containing the extramembraneous catalytic core, and F(0) - containing the membrane proton channel, linked together by a central stalk and a peripheral stalk. During catalysis, ATP synthesis in the catalytic domain of F(1) is coupled via a rotary mechanism of the central stalk subunits to proton translocation. Subunits alpha and beta form the catalytic core in F(1). Rotation of the central stalk against the surrounding alpha(3)beta(3) subunits leads to hydrolysis of ATP in three separate catalytic sites on the beta subunits. The chain is ATP synthase subunit beta, mitochondrial from Schizaphis graminum (Green bug aphid).